The sequence spans 157 residues: MHSNVKKVTDKDVIKPVGVPFVVYFSSISNNTHRFIQKLEIENLRIPYEIEQSISVDRDYVLVTPTYSGGGEYVEGAVPKQVIKFLNNKQNRSFCRGVISSGNTNFGDTFGIAGPIISKKLNVPFLYQFELLGTQHDVSQIKQILFKFWEDGNNERK.

The protein belongs to the NrdI family.

In terms of biological role, probably involved in ribonucleotide reductase function. The sequence is that of Protein NrdI from Mycoplasma capricolum subsp. capricolum (strain California kid / ATCC 27343 / NCTC 10154).